The sequence spans 335 residues: MIAITGGGTGGHLAIAKALAIELKNRGENVIFIGSNSGQDRMWFEHSDIFKFKYFFPSRGVVNKKGIHKLFALLNIIKLAFKCRCIFTEHNISSVISVGGYSSAPASFGAVIFRKKLFIHEQNAIKGKLNSILKPFCKKFFSSYGTDTYDYPIDIKFFNTARVRNELKTILFLGGSQGASFINSLALNLALNLKNHNINIIHQCGAKELETTRSKYNEMGVEAVVFDFSNEIEVYMQKSDLCISRAGASTLWELCANALPTIFIPYPYAASNHQFYNAKFLLDSNLAKIYEQNGLDKNILFTDIMNLDINSISMGLRNIVSPNGAKIIIDKILKQ.

Residues 9-11 (TGG), Asn123, Ser176, and Gln274 each bind UDP-N-acetyl-alpha-D-glucosamine.

It belongs to the glycosyltransferase 28 family. MurG subfamily.

The protein resides in the cell inner membrane. It catalyses the reaction di-trans,octa-cis-undecaprenyl diphospho-N-acetyl-alpha-D-muramoyl-L-alanyl-D-glutamyl-meso-2,6-diaminopimeloyl-D-alanyl-D-alanine + UDP-N-acetyl-alpha-D-glucosamine = di-trans,octa-cis-undecaprenyl diphospho-[N-acetyl-alpha-D-glucosaminyl-(1-&gt;4)]-N-acetyl-alpha-D-muramoyl-L-alanyl-D-glutamyl-meso-2,6-diaminopimeloyl-D-alanyl-D-alanine + UDP + H(+). It functions in the pathway cell wall biogenesis; peptidoglycan biosynthesis. In terms of biological role, cell wall formation. Catalyzes the transfer of a GlcNAc subunit on undecaprenyl-pyrophosphoryl-MurNAc-pentapeptide (lipid intermediate I) to form undecaprenyl-pyrophosphoryl-MurNAc-(pentapeptide)GlcNAc (lipid intermediate II). This Campylobacter fetus subsp. fetus (strain 82-40) protein is UDP-N-acetylglucosamine--N-acetylmuramyl-(pentapeptide) pyrophosphoryl-undecaprenol N-acetylglucosamine transferase.